The following is a 621-amino-acid chain: Cystathionine gamma-synthase (621 aa).

At lysine 429 the chain carries N6-(pyridoxal phosphate)lysine.

This sequence belongs to the trans-sulfuration enzymes family. MET7 subfamily. Both met-3 and met-7 are required to form a functional cystathionine gamma-synthase. Pyridoxal 5'-phosphate is required as a cofactor.

It catalyses the reaction O-succinyl-L-homoserine + L-cysteine = L,L-cystathionine + succinate + H(+). It participates in amino-acid biosynthesis; L-methionine biosynthesis via de novo pathway; L-cystathionine from O-succinyl-L-homoserine: step 1/1. Its function is as follows. Catalyzes the formation of L-cystathionine from O-succinyl-L-homoserine (OSHS) and L-cysteine, via a gamma-replacement reaction. In the absence of thiol, catalyzes gamma-elimination to form 2-oxobutanoate, succinate and ammonia. The sequence is that of Cystathionine gamma-synthase (met-7) from Neurospora crassa (strain ATCC 24698 / 74-OR23-1A / CBS 708.71 / DSM 1257 / FGSC 987).